Reading from the N-terminus, the 22-residue chain is Peptide PGLa-B1 (22 aa).

Position 22 is a leucine amide (Leu-22).

In terms of tissue distribution, expressed by the skin glands.

It localises to the secreted. Has antibacterial and antifungal activity. This is Peptide PGLa-B1 from Xenopus borealis (Kenyan clawed frog).